A 266-amino-acid polypeptide reads, in one-letter code: Energy-coupling factor transporter transmembrane protein EcfT 1 (266 aa).

Helical transmembrane passes span 33–53, 73–93, 107–127, 152–172, and 243–263; these read IGIL…LFTL, LIWL…GGTI, LLNG…STVI, VPVN…PTLM, and HFGD…LVIL.

Belongs to the energy-coupling factor EcfT family. As to quaternary structure, forms a stable energy-coupling factor (ECF) transporter complex composed of 2 membrane-embedded substrate-binding proteins (S component), 2 ATP-binding proteins (A component) and 2 transmembrane proteins (T component). May be able to interact with more than 1 S component at a time.

Its subcellular location is the cell membrane. Its function is as follows. Transmembrane (T) component of an energy-coupling factor (ECF) ABC-transporter complex. Unlike classic ABC transporters this ECF transporter provides the energy necessary to transport a number of different substrates. The chain is Energy-coupling factor transporter transmembrane protein EcfT 1 from Listeria monocytogenes serotype 1/2a (strain 08-5578).